The chain runs to 402 residues: UDP-glucose 6-dehydrogenase (402 aa).

Residues 2–19, Val-11, Asp-29, Lys-34, Thr-83, Thr-118, and Glu-145 contribute to the NAD(+) site; that span reads KIAV…GVLL. Substrate contacts are provided by residues 141 to 145, Lys-204, Asn-208, 249 to 253, and Gly-257; these read EFLRE and YNNPS. Tyr-259 is a binding site for NAD(+). Cys-260 acts as the Nucleophile in catalysis. Lys-263 provides a ligand contact to NAD(+). Substrate is bound at residue Lys-320. Residue Arg-327 participates in NAD(+) binding.

Belongs to the UDP-glucose/GDP-mannose dehydrogenase family.

It carries out the reaction UDP-alpha-D-glucose + 2 NAD(+) + H2O = UDP-alpha-D-glucuronate + 2 NADH + 3 H(+). It functions in the pathway nucleotide-sugar biosynthesis; UDP-alpha-D-glucuronate biosynthesis; UDP-alpha-D-glucuronate from UDP-alpha-D-glucose: step 1/1. Its function is as follows. Catalyzes the formation of UDP-glucuronic acid which is required for capsular hyaluronic acid synthesis. This is UDP-glucose 6-dehydrogenase (hasB) from Streptococcus pyogenes serotype M1.